Here is a 689-residue protein sequence, read N- to C-terminus: Glycine--tRNA ligase beta subunit (689 aa).

Belongs to the class-II aminoacyl-tRNA synthetase family. In terms of assembly, tetramer of two alpha and two beta subunits.

Its subcellular location is the cytoplasm. The catalysed reaction is tRNA(Gly) + glycine + ATP = glycyl-tRNA(Gly) + AMP + diphosphate. The protein is Glycine--tRNA ligase beta subunit of Serratia proteamaculans (strain 568).